The following is a 284-amino-acid chain: tRNA pseudouridine synthase A (284 aa).

D52 acts as the Nucleophile in catalysis. Y149 serves as a coordination point for substrate.

The protein belongs to the tRNA pseudouridine synthase TruA family. As to quaternary structure, homodimer.

The enzyme catalyses uridine(38/39/40) in tRNA = pseudouridine(38/39/40) in tRNA. Functionally, formation of pseudouridine at positions 38, 39 and 40 in the anticodon stem and loop of transfer RNAs. In Orientia tsutsugamushi (strain Boryong) (Rickettsia tsutsugamushi), this protein is tRNA pseudouridine synthase A.